A 117-amino-acid chain; its full sequence is UPF0375 protein Y45F10C.2 (117 aa).

The first 20 residues, 1-20 (MNSFVSTVLLLSVTIALVSG), serve as a signal peptide directing secretion.

It belongs to the UPF0375 family. As to expression, expressed in the uterine epithelium.

It localises to the secreted. Negatively regulates the egg-laying rate by promoting retention of fertilized eggs. This is UPF0375 protein Y45F10C.2 from Caenorhabditis elegans.